A 130-amino-acid polypeptide reads, in one-letter code: Small ribosomal subunit protein uS11 (130 aa).

Positions 1–21 are disordered; sequence MAPQSKRSGGRKQKKHVPNGV. The span at 8-17 shows a compositional bias: basic residues; the sequence is SGGRKQKKHV.

This sequence belongs to the universal ribosomal protein uS11 family. Part of the 30S ribosomal subunit. Interacts with proteins S7 and S18. Binds to IF-3.

Its function is as follows. Located on the platform of the 30S subunit, it bridges several disparate RNA helices of the 16S rRNA. Forms part of the Shine-Dalgarno cleft in the 70S ribosome. This chain is Small ribosomal subunit protein uS11, found in Acaryochloris marina (strain MBIC 11017).